We begin with the raw amino-acid sequence, 281 residues long: Tumor necrosis factor ligand superfamily member 10 (281 aa).

The Cytoplasmic segment spans residues 1-17; it reads MAMMEVQGGPSLGQTCV. A helical; Signal-anchor for type II membrane protein membrane pass occupies residues 18-38; sequence LIVIFTVLLQSLCVAVTYVYF. The Extracellular portion of the chain corresponds to 39 to 281; that stretch reads TNELKQMQDK…ASFFGAFLVG (243 aa). The 159-residue stretch at 122–280 folds into the THD domain; it reads VAAHITGTRG…EASFFGAFLV (159 aa). The disordered stretch occupies residues 124–144; the sequence is AHITGTRGRSNTLSSPNSKNE. The span at 130–141 shows a compositional bias: polar residues; the sequence is RGRSNTLSSPNS. A Zn(2+)-binding site is contributed by C230.

Belongs to the tumor necrosis factor family. Homotrimer. One TNFSF10 homotrimer interacts with three TNFSF10A mononers. One TNFSF10 homotrimer interacts with three TNFSF10B mononers. Tyrosine phosphorylated by PKDCC/VLK. As to expression, widespread; most predominant in spleen, lung and prostate.

Its subcellular location is the cell membrane. The protein localises to the secreted. Its function is as follows. Cytokine that binds to TNFRSF10A/TRAILR1, TNFRSF10B/TRAILR2, TNFRSF10C/TRAILR3, TNFRSF10D/TRAILR4 and possibly also to TNFRSF11B/OPG. Induces apoptosis. Its activity may be modulated by binding to the decoy receptors TNFRSF10C/TRAILR3, TNFRSF10D/TRAILR4 and TNFRSF11B/OPG that cannot induce apoptosis. This Homo sapiens (Human) protein is Tumor necrosis factor ligand superfamily member 10 (TNFSF10).